The primary structure comprises 268 residues: Octanoyltransferase (268 aa).

The BPL/LPL catalytic domain maps to 49 to 237 (GTQGDVILVV…ALLKALSGEL (189 aa)). Substrate contacts are provided by residues 87–94 (RGGRITWH), 167–169 (ALG), and 180–182 (GLA). Cysteine 198 serves as the catalytic Acyl-thioester intermediate.

It belongs to the LipB family.

The protein localises to the cytoplasm. The enzyme catalyses octanoyl-[ACP] + L-lysyl-[protein] = N(6)-octanoyl-L-lysyl-[protein] + holo-[ACP] + H(+). It functions in the pathway protein modification; protein lipoylation via endogenous pathway; protein N(6)-(lipoyl)lysine from octanoyl-[acyl-carrier-protein]: step 1/2. Functionally, catalyzes the transfer of endogenously produced octanoic acid from octanoyl-acyl-carrier-protein onto the lipoyl domains of lipoate-dependent enzymes. Lipoyl-ACP can also act as a substrate although octanoyl-ACP is likely to be the physiological substrate. The polypeptide is Octanoyltransferase (Corynebacterium aurimucosum (strain ATCC 700975 / DSM 44827 / CIP 107346 / CN-1) (Corynebacterium nigricans)).